Consider the following 502-residue polypeptide: Cytochrome P450 71B19 (502 aa).

Residues 1–21 form a helical membrane-spanning segment; that stretch reads MAISFLCVFLITFVSLIFFAK. Cys-444 contacts heme.

Belongs to the cytochrome P450 family. Heme serves as cofactor.

It localises to the membrane. The sequence is that of Cytochrome P450 71B19 (CYP71B19) from Arabidopsis thaliana (Mouse-ear cress).